The primary structure comprises 189 residues: Density-regulated protein homolog (189 aa).

The region spanning 105-172 (ICVSRAARGK…DLFDVIPEKW (68 aa)) is the SUI1 domain.

The protein belongs to the DENR family. Interacts with MCTS1.

Regulates translation as part of a complex with MCTS1. Specifically required for translational re-initiation in mRNAs containing upstream open reading frames (uORFs). Not required for standard translational initiation. Regulates expression of a subset of gene products including mbc, InR and EcR. This Drosophila melanogaster (Fruit fly) protein is Density-regulated protein homolog.